Consider the following 457-residue polypeptide: Protein unc-93 homolog A (457 aa).

5 consecutive transmembrane segments (helical) span residues 8–28 (VLVLSFGFLLLFTAYGGLQSL), 42–62 (ALSTLYGGMLLSSMFLPPVLI), 65–85 (LGCKWTLVLAMCCYVAFSLGN), 86–106 (FYASWYTLIPASVLVGLGAAA), and 140–160 (IFFLIFQSSGVWGNLISSLVF). N-linked (GlcNAc...) asparagine glycosylation occurs at N190. 6 helical membrane passes run 202–222 (TLLGIYTGCGFLAVLLMAVFL), 257–277 (LRLLILLPMLSGFEQAFLSGD), 291–311 (FVGYVMICFGAADALCSVLFG), 320–340 (TVLFALGAVTQLACIIALLLW), 344–364 (PSQLPVFFVFPSLWGMADAVW), and 395–415 (FVIAFGYSTFLCVSVKLYVLL). The tract at residues 438–457 (GPLAAGRTKPAEDGATQTKL) is disordered.

The protein belongs to the unc-93 family.

It is found in the cell membrane. In Bos taurus (Bovine), this protein is Protein unc-93 homolog A (UNC93A).